Consider the following 314-residue polypeptide: 2,3-dihydroxyphenylpropionate/2,3-dihydroxicinnamic acid 1,2-dioxygenase 1 (314 aa).

His-115 serves as the catalytic Proton donor. The Proton acceptor role is filled by His-179.

It belongs to the LigB/MhpB extradiol dioxygenase family. As to quaternary structure, homotetramer. Requires Fe(2+) as cofactor.

It carries out the reaction 3-(2,3-dihydroxyphenyl)propanoate + O2 = (2Z,4E)-2-hydroxy-6-oxonona-2,4-dienedioate + H(+). The catalysed reaction is (2E)-3-(2,3-dihydroxyphenyl)prop-2-enoate + O2 = (2Z,4E,7E)-2-hydroxy-6-oxonona-2,4,7-trienedioate + H(+). The protein operates within aromatic compound metabolism; 3-phenylpropanoate degradation. Its function is as follows. Catalyzes the non-heme iron(II)-dependent oxidative cleavage of 2,3-dihydroxyphenylpropionic acid and 2,3-dihydroxicinnamic acid into 2-hydroxy-6-ketononadienedioate and 2-hydroxy-6-ketononatrienedioate, respectively. The protein is 2,3-dihydroxyphenylpropionate/2,3-dihydroxicinnamic acid 1,2-dioxygenase 1 of Pseudomonas putida (Arthrobacter siderocapsulatus).